Reading from the N-terminus, the 252-residue chain is 3-dehydroquinate dehydratase (252 aa).

3-dehydroquinate-binding positions include S21, 46–48 (EWR), and R82. The Proton donor/acceptor role is filled by H143. The active-site Schiff-base intermediate with substrate is K170. 3-dehydroquinate is bound by residues R213, S232, and Q236.

The protein belongs to the type-I 3-dehydroquinase family. As to quaternary structure, homodimer.

The catalysed reaction is 3-dehydroquinate = 3-dehydroshikimate + H2O. The protein operates within metabolic intermediate biosynthesis; chorismate biosynthesis; chorismate from D-erythrose 4-phosphate and phosphoenolpyruvate: step 3/7. Functionally, involved in the third step of the chorismate pathway, which leads to the biosynthesis of aromatic amino acids. Catalyzes the cis-dehydration of 3-dehydroquinate (DHQ) and introduces the first double bond of the aromatic ring to yield 3-dehydroshikimate. The sequence is that of 3-dehydroquinate dehydratase from Escherichia coli (strain SE11).